The following is a 142-amino-acid chain: Large-conductance mechanosensitive channel (142 aa).

The next 2 membrane-spanning stretches (helical) occupy residues 14-34 (VMDL…VDSV) and 82-102 (GNFI…FLLI).

Belongs to the MscL family. In terms of assembly, homopentamer.

It localises to the cell inner membrane. In terms of biological role, channel that opens in response to stretch forces in the membrane lipid bilayer. May participate in the regulation of osmotic pressure changes within the cell. The chain is Large-conductance mechanosensitive channel from Sinorhizobium medicae (strain WSM419) (Ensifer medicae).